The primary structure comprises 288 residues: Cytochrome b-c1 complex catalytic subunit, mitochondrial (288 aa).

Residues 12–34 (SMVQKFIAGGVGVTGLTASYLLY) form a helical membrane-spanning segment. The 154-residue stretch at 69-222 (ASIRRGFQVY…DLVEYEDGTP (154 aa)) folds into the Cytochrome c domain. Heme c contacts are provided by cysteine 82, cysteine 85, and histidine 86. The segment covering 111-121 (EELEYDDEPDD) has biased composition (acidic residues). Positions 111–138 (EELEYDDEPDDEGKPRKRPGKLADYIPG) are disordered. A helical membrane pass occupies residues 250-268 (WGLKALVVLSSLYLLSIWV).

The protein belongs to the cytochrome c family. Component of the ubiquinol-cytochrome c oxidoreductase (cytochrome b-c1 complex, complex III, CIII), a multisubunit enzyme composed of 10 subunits. The complex is composed of 3 respiratory subunits cytochrome b (COB), cytochrome c1 (CYT1) and Rieske protein (RIP1), 2 core protein subunits COR1 and QCR2, and 5 low-molecular weight protein subunits QCR6, QCR7, QCR8, QCR9 and QCR10. The complex exists as an obligatory dimer and forms supercomplexes (SCs) in the inner mitochondrial membrane with a monomer or a dimer of cytochrome c oxidase (complex IV, CIV), resulting in 2 different assemblies (supercomplexes III(2)IV and III(2)IV(2)). It depends on heme c as a cofactor.

It localises to the mitochondrion inner membrane. The catalysed reaction is a quinol + 2 Fe(III)-[cytochrome c](out) = a quinone + 2 Fe(II)-[cytochrome c](out) + 2 H(+)(out). In terms of biological role, component of the ubiquinol-cytochrome c oxidoreductase, a multisubunit transmembrane complex that is part of the mitochondrial electron transport chain which drives oxidative phosphorylation. The complex plays an important role in the uptake of multiple carbon sources present in different host niches. This is Cytochrome b-c1 complex catalytic subunit, mitochondrial from Candida albicans (strain SC5314 / ATCC MYA-2876) (Yeast).